Reading from the N-terminus, the 43-residue chain is Potassium channel toxin gamma-KTx 4.6 (43 aa).

Disulfide bonds link cysteine 5–cysteine 23, cysteine 11–cysteine 34, cysteine 20–cysteine 39, and cysteine 24–cysteine 41.

This sequence belongs to the ergtoxin family. Gamma-KTx 4 subfamily. As to expression, expressed by the venom gland.

It localises to the secreted. Reversibly blocks Kv11/ERG potassium channels. This Centruroides limpidus (Mexican scorpion) protein is Potassium channel toxin gamma-KTx 4.6.